Consider the following 203-residue polypeptide: Holliday junction branch migration complex subunit RuvA (203 aa).

Residues 1 to 61 (MIIYKYGKIM…EYTKVTYGFD (61 aa)) form a domain I region. Residues 62–139 (NFKELVIFED…KFMKKLTSDE (78 aa)) form a domain II region. The flexible linker stretch occupies residues 140-147 (AAKIKVPA). A domain III region spans residues 147–203 (ASSENENKFLDTMKMLGFKQQQIKFALDKIELNDDIETCVENAIKLISQQQHETSRV).

The protein belongs to the RuvA family. In terms of assembly, homotetramer. Forms an RuvA(8)-RuvB(12)-Holliday junction (HJ) complex. HJ DNA is sandwiched between 2 RuvA tetramers; dsDNA enters through RuvA and exits via RuvB. An RuvB hexamer assembles on each DNA strand where it exits the tetramer. Each RuvB hexamer is contacted by two RuvA subunits (via domain III) on 2 adjacent RuvB subunits; this complex drives branch migration. In the full resolvosome a probable DNA-RuvA(4)-RuvB(12)-RuvC(2) complex forms which resolves the HJ.

The protein localises to the cytoplasm. Functionally, the RuvA-RuvB-RuvC complex processes Holliday junction (HJ) DNA during genetic recombination and DNA repair, while the RuvA-RuvB complex plays an important role in the rescue of blocked DNA replication forks via replication fork reversal (RFR). RuvA specifically binds to HJ cruciform DNA, conferring on it an open structure. The RuvB hexamer acts as an ATP-dependent pump, pulling dsDNA into and through the RuvAB complex. HJ branch migration allows RuvC to scan DNA until it finds its consensus sequence, where it cleaves and resolves the cruciform DNA. The chain is Holliday junction branch migration complex subunit RuvA from Metamycoplasma arthritidis (strain 158L3-1) (Mycoplasma arthritidis).